A 167-amino-acid polypeptide reads, in one-letter code: Translation initiation factor IF-3 (167 aa).

It belongs to the IF-3 family. Monomer.

It is found in the cytoplasm. Its function is as follows. IF-3 binds to the 30S ribosomal subunit and shifts the equilibrium between 70S ribosomes and their 50S and 30S subunits in favor of the free subunits, thus enhancing the availability of 30S subunits on which protein synthesis initiation begins. The sequence is that of Translation initiation factor IF-3 from Shouchella clausii (strain KSM-K16) (Alkalihalobacillus clausii).